We begin with the raw amino-acid sequence, 131 residues long: Small ribosomal subunit protein uS8 (131 aa).

This sequence belongs to the universal ribosomal protein uS8 family. In terms of assembly, part of the 30S ribosomal subunit. Contacts proteins S5 and S12.

Functionally, one of the primary rRNA binding proteins, it binds directly to 16S rRNA central domain where it helps coordinate assembly of the platform of the 30S subunit. This Dechloromonas aromatica (strain RCB) protein is Small ribosomal subunit protein uS8.